We begin with the raw amino-acid sequence, 382 residues long: Histidinol-phosphate aminotransferase (382 aa).

Residue lysine 215 is modified to N6-(pyridoxal phosphate)lysine. Positions asparagine 363 to isoleucine 382 are disordered.

This sequence belongs to the class-II pyridoxal-phosphate-dependent aminotransferase family. Histidinol-phosphate aminotransferase subfamily. Homodimer. It depends on pyridoxal 5'-phosphate as a cofactor.

The enzyme catalyses L-histidinol phosphate + 2-oxoglutarate = 3-(imidazol-4-yl)-2-oxopropyl phosphate + L-glutamate. Its pathway is amino-acid biosynthesis; L-histidine biosynthesis; L-histidine from 5-phospho-alpha-D-ribose 1-diphosphate: step 7/9. The sequence is that of Histidinol-phosphate aminotransferase from Yersinia pestis bv. Antiqua (strain Antiqua).